Reading from the N-terminus, the 146-residue chain is Mite group 2 allergen Der p 2 (146 aa).

The signal sequence occupies residues 1 to 17 (MMYKILCLSLLVAAVAR). 3 disulfide bridges follow: Cys25/Cys136, Cys38/Cys44, and Cys90/Cys95.

It belongs to the NPC2 family.

It localises to the secreted. The chain is Mite group 2 allergen Der p 2 (DERP2) from Dermatophagoides pteronyssinus (European house dust mite).